A 563-amino-acid polypeptide reads, in one-letter code: UvrABC system protein C (563 aa).

The region spanning 12 to 87 (NKSGVYIFKK…IYKYKPKYNA (76 aa)) is the GIY-YIG domain. Residues 194–229 (SNVISFIKLKMEQHARLLDFENAAKYRDILLNFNKV) form the UVR domain.

The protein belongs to the UvrC family. As to quaternary structure, interacts with UvrB in an incision complex.

The protein resides in the cytoplasm. Its function is as follows. The UvrABC repair system catalyzes the recognition and processing of DNA lesions. UvrC both incises the 5' and 3' sides of the lesion. The N-terminal half is responsible for the 3' incision and the C-terminal half is responsible for the 5' incision. In Fervidobacterium nodosum (strain ATCC 35602 / DSM 5306 / Rt17-B1), this protein is UvrABC system protein C.